We begin with the raw amino-acid sequence, 339 residues long: MSEVYKQAGVDVEKGYEAVERLKKHVARTHRPEVLGGIGAFAGAFDLSSLQYKEPVLLSGTDGVGTKLKLAIDLDKHDTVGIDLVAMCVNDIIAQGGDPLFFLDYIACGENDPSRIEAIVSGIAEGCEQAGAALIGGETAEMPGMYDPDEYDLAGFVVGIVEKSAMITGKDIKSGDVVIGLSSSGIHSNGYSLVRKLIADVDLNQTYPGLSQTVKDAVMAPTKIYAKSIQALKKEVNLKGISHITGGGFDENIPRMLPDGLGVLIETNSWDIPEVFHFLEEKGNIDNREMYGVFNMGIGMAVVVAEEDVSIALQLLEKVDEQAYVIGKVTEEEGVHFTL.

This sequence belongs to the AIR synthase family.

It is found in the cytoplasm. It carries out the reaction 2-formamido-N(1)-(5-O-phospho-beta-D-ribosyl)acetamidine + ATP = 5-amino-1-(5-phospho-beta-D-ribosyl)imidazole + ADP + phosphate + H(+). It functions in the pathway purine metabolism; IMP biosynthesis via de novo pathway; 5-amino-1-(5-phospho-D-ribosyl)imidazole from N(2)-formyl-N(1)-(5-phospho-D-ribosyl)glycinamide: step 2/2. This Oceanobacillus iheyensis (strain DSM 14371 / CIP 107618 / JCM 11309 / KCTC 3954 / HTE831) protein is Phosphoribosylformylglycinamidine cyclo-ligase.